Reading from the N-terminus, the 826-residue chain is Ribonucleoside-diphosphate reductase large subunit (826 aa).

Substrate contacts are provided by residues Thr-171, 186–187 (SC), Gly-217, 387–391 (NLCAE), and 594–598 (PTSGC). Residues Cys-187 and Cys-403 are joined by a disulfide bond. Asn-387 (proton acceptor) is an active-site residue. Cys-389 (cysteine radical intermediate) is an active-site residue. Glu-391 functions as the Proton acceptor in the catalytic mechanism.

This sequence belongs to the ribonucleoside diphosphate reductase large chain family. Heterotetramer composed of a homodimer of the large subunit (R1) and a homodimer of the small subunit (R2). Larger multisubunit protein complex are also active, composed of (R1)n(R2)n.

It catalyses the reaction a 2'-deoxyribonucleoside 5'-diphosphate + [thioredoxin]-disulfide + H2O = a ribonucleoside 5'-diphosphate + [thioredoxin]-dithiol. In terms of biological role, ribonucleoside-diphosphate reductase holoenzyme provides the precursors necessary for viral DNA synthesis. Allows virus growth in non-dividing cells, as well as reactivation from latency in infected hosts. Catalyzes the biosynthesis of deoxyribonucleotides from the corresponding ribonucleotides. This Epstein-Barr virus (strain GD1) (HHV-4) protein is Ribonucleoside-diphosphate reductase large subunit.